The following is a 399-amino-acid chain: Lipoyl synthase, mitochondrial (399 aa).

Residues 1–30 (MRAVLELTRRRARNARFARARAVVGARARA) constitute a mitochondrion transit peptide. A compositionally biased stretch (basic and acidic residues) spans 31-41 (ADAQELRDDSK). Residues 31–58 (ADAQELRDDSKGGSSVDKATSTAAEARE) form a disordered region. Residues cysteine 131, cysteine 136, cysteine 142, cysteine 162, cysteine 166, cysteine 169, and serine 375 each coordinate [4Fe-4S] cluster. A Radical SAM core domain is found at 145–364 (GGDGKTATAT…QEIAEEMGFL (220 aa)).

Belongs to the radical SAM superfamily. Lipoyl synthase family. [4Fe-4S] cluster is required as a cofactor.

It is found in the mitochondrion. The catalysed reaction is [[Fe-S] cluster scaffold protein carrying a second [4Fe-4S](2+) cluster] + N(6)-octanoyl-L-lysyl-[protein] + 2 oxidized [2Fe-2S]-[ferredoxin] + 2 S-adenosyl-L-methionine + 4 H(+) = [[Fe-S] cluster scaffold protein] + N(6)-[(R)-dihydrolipoyl]-L-lysyl-[protein] + 4 Fe(3+) + 2 hydrogen sulfide + 2 5'-deoxyadenosine + 2 L-methionine + 2 reduced [2Fe-2S]-[ferredoxin]. The protein operates within protein modification; protein lipoylation via endogenous pathway; protein N(6)-(lipoyl)lysine from octanoyl-[acyl-carrier-protein]: step 2/2. Its function is as follows. Catalyzes the radical-mediated insertion of two sulfur atoms into the C-6 and C-8 positions of the octanoyl moiety bound to the lipoyl domains of lipoate-dependent enzymes, thereby converting the octanoylated domains into lipoylated derivatives. This Ostreococcus lucimarinus (strain CCE9901) protein is Lipoyl synthase, mitochondrial.